A 176-amino-acid polypeptide reads, in one-letter code: Inorganic pyrophosphatase (176 aa).

Residues lysine 30, arginine 44, and tyrosine 56 each coordinate substrate. Mg(2+) contacts are provided by aspartate 66, aspartate 71, and aspartate 103. Tyrosine 142 lines the substrate pocket.

It belongs to the PPase family. As to quaternary structure, homohexamer. Requires Mg(2+) as cofactor.

It is found in the cytoplasm. The enzyme catalyses diphosphate + H2O = 2 phosphate + H(+). Its function is as follows. Catalyzes the hydrolysis of inorganic pyrophosphate (PPi) forming two phosphate ions. The chain is Inorganic pyrophosphatase from Brucella melitensis biotype 1 (strain ATCC 23456 / CCUG 17765 / NCTC 10094 / 16M).